The primary structure comprises 237 residues: Pyridoxal phosphate homeostasis protein (237 aa).

Lys31 is subject to N6-(pyridoxal phosphate)lysine.

Belongs to the pyridoxal phosphate-binding protein YggS/PROSC family.

It is found in the cytoplasm. It localises to the nucleus. Functionally, pyridoxal 5'-phosphate (PLP)-binding protein, which may be involved in intracellular homeostatic regulation of pyridoxal 5'-phosphate (PLP), the active form of vitamin B6. This is Pyridoxal phosphate homeostasis protein from Schizosaccharomyces pombe (strain 972 / ATCC 24843) (Fission yeast).